The chain runs to 365 residues: Phosphoserine aminotransferase (365 aa).

Arginine 46 contributes to the L-glutamate binding site. Pyridoxal 5'-phosphate-binding positions include 80 to 81 (AT), tryptophan 106, threonine 157, aspartate 177, and glutamine 200. Lysine 201 bears the N6-(pyridoxal phosphate)lysine mark. Residue 242–243 (NT) coordinates pyridoxal 5'-phosphate.

This sequence belongs to the class-V pyridoxal-phosphate-dependent aminotransferase family. SerC subfamily. As to quaternary structure, homodimer. Pyridoxal 5'-phosphate is required as a cofactor.

It is found in the cytoplasm. It carries out the reaction O-phospho-L-serine + 2-oxoglutarate = 3-phosphooxypyruvate + L-glutamate. It catalyses the reaction 4-(phosphooxy)-L-threonine + 2-oxoglutarate = (R)-3-hydroxy-2-oxo-4-phosphooxybutanoate + L-glutamate. The protein operates within amino-acid biosynthesis; L-serine biosynthesis; L-serine from 3-phospho-D-glycerate: step 2/3. Its pathway is cofactor biosynthesis; pyridoxine 5'-phosphate biosynthesis; pyridoxine 5'-phosphate from D-erythrose 4-phosphate: step 3/5. Functionally, catalyzes the reversible conversion of 3-phosphohydroxypyruvate to phosphoserine and of 3-hydroxy-2-oxo-4-phosphonooxybutanoate to phosphohydroxythreonine. The protein is Phosphoserine aminotransferase of Leptospira biflexa serovar Patoc (strain Patoc 1 / Ames).